The primary structure comprises 439 residues: Proline--tRNA ligase (439 aa).

Belongs to the class-II aminoacyl-tRNA synthetase family. ProS type 2 subfamily. In terms of assembly, homodimer.

The protein localises to the cytoplasm. The enzyme catalyses tRNA(Pro) + L-proline + ATP = L-prolyl-tRNA(Pro) + AMP + diphosphate. Its function is as follows. Catalyzes the attachment of proline to tRNA(Pro) in a two-step reaction: proline is first activated by ATP to form Pro-AMP and then transferred to the acceptor end of tRNA(Pro). The polypeptide is Proline--tRNA ligase (Parvibaculum lavamentivorans (strain DS-1 / DSM 13023 / NCIMB 13966)).